The sequence spans 596 residues: DNA polymerase kappa (596 aa).

Residues 85–320 form the UmuC domain; sequence CVCIDMDAYF…LPIRKVGGIG (236 aa). 2 residues coordinate Mg(2+): Asp89 and Asp180. Residue Glu181 is part of the active site. The UBZ4-type zinc-finger motif lies at 516-545; sequence TRPCPICGTDVENRLDVMNCHVDECILKVQ. Cys519, Cys522, His536, and Cys540 together coordinate Zn(2+). The disordered stretch occupies residues 559–584; the sequence is NKSTQKPERPSTKKRKLQEKRPKAKK. Residues 570–584 show a composition bias toward basic residues; sequence TKKRKLQEKRPKAKK.

Belongs to the DNA polymerase type-Y family. The cofactor is Mg(2+). Mn(2+) is required as a cofactor.

Its subcellular location is the nucleus. It carries out the reaction DNA(n) + a 2'-deoxyribonucleoside 5'-triphosphate = DNA(n+1) + diphosphate. DNA polymerase specifically involved in DNA repair. Plays an important role in translesion synthesis, where the normal high-fidelity DNA polymerases cannot proceed and DNA synthesis stalls. Depending on the context, it inserts the correct base, but causes frequent base transitions, transversions and frameshifts. Lacks 3'-5' proofreading exonuclease activity. Forms a Schiff base with 5'-deoxyribose phosphate at abasic sites, but does not have lyase activity. The chain is DNA polymerase kappa (polk-1) from Caenorhabditis elegans.